The following is a 346-amino-acid chain: FAS-associated factor 2 (346 aa).

At Lys-68 the chain carries N6-acetyllysine. Positions 176 to 251 (SERLEREERN…EEKERKLECL (76 aa)) form a coiled coil. Positions 200-262 (ASLRADQEKE…PEPSPDDPDS (63 aa)) are disordered. Basic and acidic residues predominate over residues 204–249 (ADQEKERKKREERERKRRKEEEVQQQKLAEERRRQNLQEEKERKLE). Residues 258-340 (DDPDSVKIIF…GLSHTEVLFV (83 aa)) form the UBX domain.

In terms of assembly, identified in a complex that contains SEL1L, OS9, FAF2/UBXD8, UBE2J1/UBC6E and AUP1. Interacts with YOD1. Interacts (via N-terminus) with UBQLN2 (via C-terminus). Interacts with PNPLA2 and UBAC2. Interacts with ZFAND2B; probably through VCP. Interacts with LMBR1L.

Its subcellular location is the cytoplasm. The protein localises to the lipid droplet. It localises to the endoplasmic reticulum. In terms of biological role, plays an important role in endoplasmic reticulum-associated degradation (ERAD) that mediates ubiquitin-dependent degradation of misfolded endoplasmic reticulum proteins. By controlling the steady-state expression of the IGF1R receptor, indirectly regulates the insulin-like growth factor receptor signaling pathway. Involved in inhibition of lipid droplet degradation by binding to phospholipase PNPL2 and inhibiting its activity by promoting dissociation of PNPL2 from its endogenous activator, ABHD5 which inhibits the rate of triacylglycerol hydrolysis. Involved in stress granule disassembly: associates with ubiquitinated G3BP1 in response to heat shock, thereby promoting interaction between ubiquitinated G3BP1 and VCP, followed by G3BP1 extraction from stress granules and stress granule disassembly. The chain is FAS-associated factor 2 (Faf2) from Rattus norvegicus (Rat).